Reading from the N-terminus, the 187-residue chain is Peptidyl-tRNA hydrolase (187 aa).

Position 18 (Tyr18) interacts with tRNA. His23 (proton acceptor) is an active-site residue. Residues Phe65, Asn67, and Asn113 each contribute to the tRNA site.

This sequence belongs to the PTH family. Monomer.

It is found in the cytoplasm. The catalysed reaction is an N-acyl-L-alpha-aminoacyl-tRNA + H2O = an N-acyl-L-amino acid + a tRNA + H(+). Hydrolyzes ribosome-free peptidyl-tRNAs (with 1 or more amino acids incorporated), which drop off the ribosome during protein synthesis, or as a result of ribosome stalling. Functionally, catalyzes the release of premature peptidyl moieties from peptidyl-tRNA molecules trapped in stalled 50S ribosomal subunits, and thus maintains levels of free tRNAs and 50S ribosomes. The sequence is that of Peptidyl-tRNA hydrolase from Coxiella burnetii (strain CbuG_Q212) (Coxiella burnetii (strain Q212)).